Here is a 350-residue protein sequence, read N- to C-terminus: Major allergen Mal f 1 (350 aa).

Residues 1-22 (MRYSTVLAALALLGTSAVSVLA) form the signal peptide.

The protein localises to the secreted. It localises to the cell wall. In Malassezia furfur (Pityriasis versicolor infection agent), this protein is Major allergen Mal f 1.